Consider the following 165-residue polypeptide: Ubiquitin-conjugating enzyme E2 G2 (165 aa).

Ala2 carries the N-acetylalanine modification. The UBC core domain maps to 4 to 164 (TALKRLMAEY…AKQIVQKSLG (161 aa)). The active-site Glycyl thioester intermediate is Cys89.

Belongs to the ubiquitin-conjugating enzyme family. As to quaternary structure, interacts with AUP1 (via C-terminus); the interaction recruits UBE2G2 to lipid droplets. Interacts with ubiquitin ligases AMFR/gp78 and RNF139/TRC8; recruitment to lipid droplets by AUP1 facilitates interaction of UBE2G2 with AMFR and RNF139, leading to sterol-induced ubiquitination of 3-hydroxy-3-methylglutaryl coenzyme A reductase and its subsequent proteasomal degradation.

Its subcellular location is the endoplasmic reticulum. It localises to the lipid droplet. The enzyme catalyses S-ubiquitinyl-[E1 ubiquitin-activating enzyme]-L-cysteine + [E2 ubiquitin-conjugating enzyme]-L-cysteine = [E1 ubiquitin-activating enzyme]-L-cysteine + S-ubiquitinyl-[E2 ubiquitin-conjugating enzyme]-L-cysteine.. The protein operates within protein modification; protein ubiquitination. Its function is as follows. Accepts ubiquitin from the E1 complex and catalyzes its covalent attachment to other proteins. In vitro catalyzes 'Lys-48'-linked polyubiquitination. Involved in endoplasmic reticulum-associated degradation (ERAD). Required for sterol-induced ubiquitination of 3-hydroxy-3-methylglutaryl coenzyme A reductase and its subsequent proteasomal degradation. The chain is Ubiquitin-conjugating enzyme E2 G2 from Bos taurus (Bovine).